Here is a 630-residue protein sequence, read N- to C-terminus: Probable potassium transport system protein Kup 1 (630 aa).

Helical transmembrane passes span 15–35 (FAAL…TSPL), 59–79 (LSLI…TFIM), 109–129 (WIMI…MVTP), 145–165 (PALK…LFFV), 173–193 (VGAF…LLGV), 223–243 (LVAM…YADM), 255–275 (WFAF…ALIL), 297–317 (LVGL…SGAF), 345–365 (IYLP…VLGF), 374–394 (AYGI…TVVV), 405–425 (AGLL…ANIL), and 427–447 (IPDG…LMTT).

The protein belongs to the HAK/KUP transporter (TC 2.A.72) family.

It is found in the cell inner membrane. It carries out the reaction K(+)(in) + H(+)(in) = K(+)(out) + H(+)(out). Transport of potassium into the cell. Likely operates as a K(+):H(+) symporter. The sequence is that of Probable potassium transport system protein Kup 1 from Dechloromonas aromatica (strain RCB).